A 256-amino-acid chain; its full sequence is F-actin-capping protein subunit alpha (256 aa).

Position 31 is a phosphoserine (Ser31).

It belongs to the F-actin-capping protein alpha subunit family. In terms of assembly, component of the F-actin capping complex, composed of a heterodimer of an alpha and a beta subunit.

It localises to the cytoplasm. The protein resides in the cytoskeleton. Its subcellular location is the actin patch. Functionally, F-actin-capping proteins bind in a Ca(2+)-independent manner to the fast growing ends of actin filaments (barbed end) thereby blocking the exchange of subunits at these ends. Unlike other capping proteins (such as gelsolin and severin), these proteins do not sever actin filaments. Competes with formin cdc12 for attachment to the actin filaments barbed ends. Slowly replaces cdc12 on the barbed ends in preparation for filament disassembly during contractile ring constriction. This is F-actin-capping protein subunit alpha (acp1) from Schizosaccharomyces pombe (strain 972 / ATCC 24843) (Fission yeast).